Reading from the N-terminus, the 39-residue chain is Cytochrome b559 subunit beta (39 aa).

Residues 14–30 (WLTVHGLAVPTVSFLGS) traverse the membrane as a helical segment. H18 serves as a coordination point for heme.

The protein belongs to the PsbE/PsbF family. Heterodimer of an alpha subunit and a beta subunit. PSII is composed of 1 copy each of membrane proteins PsbA, PsbB, PsbC, PsbD, PsbE, PsbF, PsbH, PsbI, PsbJ, PsbK, PsbL, PsbM, PsbT, PsbX, PsbY, PsbZ, Psb30/Ycf12, at least 3 peripheral proteins of the oxygen-evolving complex and a large number of cofactors. It forms dimeric complexes. Requires heme b as cofactor.

Its subcellular location is the plastid. The protein localises to the chloroplast thylakoid membrane. In terms of biological role, this b-type cytochrome is tightly associated with the reaction center of photosystem II (PSII). PSII is a light-driven water:plastoquinone oxidoreductase that uses light energy to abstract electrons from H(2)O, generating O(2) and a proton gradient subsequently used for ATP formation. It consists of a core antenna complex that captures photons, and an electron transfer chain that converts photonic excitation into a charge separation. This Lactuca sativa (Garden lettuce) protein is Cytochrome b559 subunit beta.